A 405-amino-acid polypeptide reads, in one-letter code: Threonine synthase (405 aa).

An N6-(pyridoxal phosphate)lysine modification is found at Lys-106. Residues Asn-132, Gly-233–Asn-237, and Thr-371 each bind pyridoxal 5'-phosphate.

It belongs to the threonine synthase family. Pyridoxal 5'-phosphate serves as cofactor.

It catalyses the reaction O-phospho-L-homoserine + H2O = L-threonine + phosphate. It functions in the pathway amino-acid biosynthesis; L-threonine biosynthesis; L-threonine from L-aspartate: step 5/5. In terms of biological role, catalyzes the gamma-elimination of phosphate from L-phosphohomoserine and the beta-addition of water to produce L-threonine. This Methanocaldococcus jannaschii (strain ATCC 43067 / DSM 2661 / JAL-1 / JCM 10045 / NBRC 100440) (Methanococcus jannaschii) protein is Threonine synthase (thrC).